The chain runs to 578 residues: Isocitrate dehydrogenase kinase/phosphatase (578 aa).

ATP contacts are provided by residues 315–321 (APGIRGM) and K336. D371 is a catalytic residue.

Belongs to the AceK family.

Its subcellular location is the cytoplasm. The catalysed reaction is L-seryl-[isocitrate dehydrogenase] + ATP = O-phospho-L-seryl-[isocitrate dehydrogenase] + ADP + H(+). Bifunctional enzyme which can phosphorylate or dephosphorylate isocitrate dehydrogenase (IDH) on a specific serine residue. This is a regulatory mechanism which enables bacteria to bypass the Krebs cycle via the glyoxylate shunt in response to the source of carbon. When bacteria are grown on glucose, IDH is fully active and unphosphorylated, but when grown on acetate or ethanol, the activity of IDH declines drastically concomitant with its phosphorylation. In Escherichia coli O17:K52:H18 (strain UMN026 / ExPEC), this protein is Isocitrate dehydrogenase kinase/phosphatase.